The following is a 321-amino-acid chain: NADPH-dependent codeinone reductase 1-5 (321 aa).

2 residues coordinate NADPH: T27 and D51. Active-site proton donor residues include Y56 and H119. A substrate-binding site is contributed by H119. The NADPH site is built by Q187, S214, L216, S264, and R269.

This sequence belongs to the aldo/keto reductase family. Latex secreting cells (laticifer cells). Expressed constitutively and ubiquitously with highest levels in capsules.

The protein resides in the cytoplasm. The protein localises to the cytosol. The enzyme catalyses codeine + NADP(+) = codeinone + NADPH + H(+). The catalysed reaction is neopine + NADP(+) = neopinone + NADPH + H(+). It catalyses the reaction morphine + NADP(+) = morphinone + NADPH + H(+). It carries out the reaction neomorphine + NADP(+) = neomorphinone + NADPH + H(+). The protein operates within alkaloid biosynthesis; morphine biosynthesis. Its function is as follows. NADPH-dependent codeinone reductase involved in biosynthesis of morphinan-type benzylisoquinoline and opiate alkaloids natural products. Reduces codeinone to codeine in the penultimate step in morphine biosynthesis. Can use morphinone, hydrocodone and hydromorphone as substrate during reductive reaction with NADPH as cofactor, and morphine and dihydrocodeine as substrate during oxidative reaction with NADP as cofactor. Converts morphinone to morphine, and neomorphinone to neomorphine. Reduces irreversibly neopinone, a spontaneous isomer of codeinone, to neopine; in planta, neopine levels are limited to low levels. The sequence is that of NADPH-dependent codeinone reductase 1-5 from Papaver somniferum (Opium poppy).